The sequence spans 192 residues: Elongation factor P (192 aa).

Belongs to the elongation factor P family.

The protein localises to the cytoplasm. It functions in the pathway protein biosynthesis; polypeptide chain elongation. In terms of biological role, involved in peptide bond synthesis. Stimulates efficient translation and peptide-bond synthesis on native or reconstituted 70S ribosomes in vitro. Probably functions indirectly by altering the affinity of the ribosome for aminoacyl-tRNA, thus increasing their reactivity as acceptors for peptidyl transferase. The sequence is that of Elongation factor P from Borrelia recurrentis (strain A1).